Reading from the N-terminus, the 485-residue chain is MSIRYESVENLLTLIKDKKIKPSDVVKDVYDAIEETDPTIKSFLALDKENAIKKAQELDELQAKDQMDGKLFGIPMGIKDNIITNGLETTCASKMLEEFVPIYESTVMEKLHNENAVLIGKLNMDEFAMGGSTETSYFKKTVNPFDHKAVPGGSSGGSAAAVAAGLVPFSLGSDTGGSIRQPAAYCGVVGMKPTYGRVSRFGLVAFASSLDQIGPLTRNVKDNAIVLEAISGADVNDSTSASVDDVDFTSEIGKDIKGLKVALPKEYLGEGVADDVKEAVQNAVETLKSLGAVVEEVSLPNTKFGIPSYYVIASSEASSNLSRFDGIRYGYHSKEAHSLEELYKMSRSEGFGKEVKRRIFLGTFALSSGYYDAYYKKSQKVRTLIKNDFDKVFENYDVVVGPTAPTTAFNLGEEIDDPLTMYANDLLTTPVNLAGLPGISVPCGQSNGRPIGLQFIGKPFDEKTLYRVAYQYETQYNLHDVYEKL.

Residues Lys79 and Ser154 each act as charge relay system in the active site. The Acyl-ester intermediate role is filled by Ser178.

The protein belongs to the amidase family. GatA subfamily. As to quaternary structure, heterotrimer of A, B and C subunits.

The enzyme catalyses L-glutamyl-tRNA(Gln) + L-glutamine + ATP + H2O = L-glutaminyl-tRNA(Gln) + L-glutamate + ADP + phosphate + H(+). Its function is as follows. Allows the formation of correctly charged Gln-tRNA(Gln) through the transamidation of misacylated Glu-tRNA(Gln) in organisms which lack glutaminyl-tRNA synthetase. The reaction takes place in the presence of glutamine and ATP through an activated gamma-phospho-Glu-tRNA(Gln). This is Glutamyl-tRNA(Gln) amidotransferase subunit A from Staphylococcus aureus (strain bovine RF122 / ET3-1).